The following is a 141-amino-acid chain: Hemoglobin subunit beta (141 aa).

The 140-residue stretch at 2-141 (HWSEVELHEI…VVDAISKEYH (140 aa)) folds into the Globin domain. 2 residues coordinate heme b: His58 and His87.

This sequence belongs to the globin family. As to quaternary structure, heterotetramer of two alpha chains and two beta chains. As to expression, red blood cells.

Involved in oxygen transport from the lung to the various peripheral tissues. This Heterodontus portusjacksoni (Port Jackson shark) protein is Hemoglobin subunit beta (HBB).